The following is a 128-amino-acid chain: Holo-[acyl-carrier-protein] synthase (128 aa).

Mg(2+)-binding residues include Asp-9 and Glu-56.

This sequence belongs to the P-Pant transferase superfamily. AcpS family. It depends on Mg(2+) as a cofactor.

Its subcellular location is the cytoplasm. The catalysed reaction is apo-[ACP] + CoA = holo-[ACP] + adenosine 3',5'-bisphosphate + H(+). Functionally, transfers the 4'-phosphopantetheine moiety from coenzyme A to a Ser of acyl-carrier-protein. The chain is Holo-[acyl-carrier-protein] synthase from Pelagibacter ubique (strain HTCC1062).